The sequence spans 202 residues: MTVSETESAVPVDASAYREAMSRLASAVHLITTDGPGGRAGFTASAVCSVSDAPPTLLVCINRAASAYAPLIRNGTLCVNTLGGGHETVAGLFGGRTPMDERFAAGTWRRLRSGAPALTDALVSFDCRIVERHAVGSHDVLYCAVEAVAAAGQADALLYSERRYRTLPRAPRGGSAPAEPARGARAIGARPPEGPVLALRSA.

The segment covering 168-191 (PRAPRGGSAPAEPARGARAIGARP) has biased composition (low complexity). Residues 168–202 (PRAPRGGSAPAEPARGARAIGARPPEGPVLALRSA) are disordered.

This sequence belongs to the non-flavoprotein flavin reductase family. RutF subfamily.

It carries out the reaction FMNH2 + NAD(+) = FMN + NADH + 2 H(+). Its function is as follows. Catalyzes the reduction of FMN to FMNH2 which is used to reduce pyrimidine by RutA via the Rut pathway. This is FMN reductase (NADH) RutF from Methylorubrum populi (strain ATCC BAA-705 / NCIMB 13946 / BJ001) (Methylobacterium populi).